A 483-amino-acid chain; its full sequence is ATP synthase subunit beta (483 aa).

169 to 176 lines the ATP pocket; it reads GGAGVGKT.

The protein belongs to the ATPase alpha/beta chains family. As to quaternary structure, F-type ATPases have 2 components, CF(1) - the catalytic core - and CF(0) - the membrane proton channel. CF(1) has five subunits: alpha(3), beta(3), gamma(1), delta(1), epsilon(1). CF(0) has three main subunits: a(1), b(2) and c(9-12). The alpha and beta chains form an alternating ring which encloses part of the gamma chain. CF(1) is attached to CF(0) by a central stalk formed by the gamma and epsilon chains, while a peripheral stalk is formed by the delta and b chains.

Its subcellular location is the cell membrane. The catalysed reaction is ATP + H2O + 4 H(+)(in) = ADP + phosphate + 5 H(+)(out). Produces ATP from ADP in the presence of a proton gradient across the membrane. The catalytic sites are hosted primarily by the beta subunits. This Corynebacterium glutamicum (strain ATCC 13032 / DSM 20300 / JCM 1318 / BCRC 11384 / CCUG 27702 / LMG 3730 / NBRC 12168 / NCIMB 10025 / NRRL B-2784 / 534) protein is ATP synthase subunit beta.